We begin with the raw amino-acid sequence, 467 residues long: Probable amino acid permease 7 (467 aa).

Residues 1-29 (MDIKEDDESRVITPTELQLHDSVTARTGT) are Cytoplasmic-facing. A helical transmembrane segment spans residues 30–50 (LWTAVAHIITGVIGAGVLSLA). Over 51–58 (WATAELGW) the chain is Extracellular. A helical transmembrane segment spans residues 59 to 79 (IAGPAALIAFAGVTLLSAFLL). Residues 80 to 111 (SDCYRFPDPNNGPLRLNSYSQAVKLYLGKKNE) lie on the Cytoplasmic side of the membrane. Residues 112 to 132 (IVCGVVVYISLFGCGIAYTIV) traverse the membrane as a helical segment. Topologically, residues 133–163 (IATCSRAIMKSNCYHRNGHNATCSYGDNNNY) are extracellular. Helical transmembrane passes span 164 to 184 (FMVL…FHNM) and 185 to 205 (VWLS…GIGL). The Extracellular portion of the chain corresponds to 206-231 (ALGKIIENRKIEGSIRGIPAENRGEK). The chain crosses the membrane as a helical span at residues 232–252 (VWIVFQALGNIAFSYPFSIIL). Residues 253–274 (LEIQDTLRSPPAEKQTMKKAST) lie on the Cytoplasmic side of the membrane. A helical membrane pass occupies residues 275 to 295 (VAVFIQTFFFFCCGCFGYAAF). Residues 296-312 (GDSTPGNLLTGFGFYEP) lie on the Extracellular side of the membrane. The chain crosses the membrane as a helical span at residues 313–333 (FWLVDFANACIVLHLVGGYQV). The Cytoplasmic portion of the chain corresponds to 334–383 (YSQPIFAAAERSLTKKYPENKFIARFYGFKLPLLRGETVRLNPMRMCLRT). The next 2 membrane-spanning stretches (helical) occupy residues 384 to 404 (MYVL…EVLG) and 405 to 425 (VVGA…MCIL). Residues 426 to 443 (QKKIRSWTRPWLLLRGFS) are Cytoplasmic-facing. Residues 444-464 (FVCLLVCLLSLVGSIYGLVGA) form a helical membrane-spanning segment. Over 465–467 (KFG) the chain is Extracellular.

It belongs to the amino acid/polyamine transporter 2 family. Amino acid/auxin permease (AAAP) (TC 2.A.18.2) subfamily.

It localises to the cell membrane. Its function is as follows. Amino acid-proton symporter. Stereospecific transporter with a broad specificity for neutral amino acids. In Arabidopsis thaliana (Mouse-ear cress), this protein is Probable amino acid permease 7 (AAP7).